Here is a 426-residue protein sequence, read N- to C-terminus: Phosphomethylpyrimidine synthase (426 aa).

Residues asparagine 65, methionine 94, tyrosine 123, histidine 162, 184 to 186, 225 to 228, and glutamate 264 each bind substrate; these read SRG and DGMR. A Zn(2+)-binding site is contributed by histidine 268. A substrate-binding site is contributed by tyrosine 291. Histidine 332 provides a ligand contact to Zn(2+). Residues cysteine 408, cysteine 411, and cysteine 415 each coordinate [4Fe-4S] cluster.

Belongs to the ThiC family. [4Fe-4S] cluster serves as cofactor.

The catalysed reaction is 5-amino-1-(5-phospho-beta-D-ribosyl)imidazole + S-adenosyl-L-methionine = 4-amino-2-methyl-5-(phosphooxymethyl)pyrimidine + CO + 5'-deoxyadenosine + formate + L-methionine + 3 H(+). The protein operates within cofactor biosynthesis; thiamine diphosphate biosynthesis. Functionally, catalyzes the synthesis of the hydroxymethylpyrimidine phosphate (HMP-P) moiety of thiamine from aminoimidazole ribotide (AIR) in a radical S-adenosyl-L-methionine (SAM)-dependent reaction. The polypeptide is Phosphomethylpyrimidine synthase (Methanococcus vannielii (strain ATCC 35089 / DSM 1224 / JCM 13029 / OCM 148 / SB)).